A 238-amino-acid polypeptide reads, in one-letter code: 4-hydroxy-tetrahydrodipicolinate reductase (238 aa).

Gly-12 to Met-17 is an NAD(+) binding site. Position 40 (Arg-40) interacts with NADP(+). NAD(+)-binding positions include Gly-93–Thr-95 and Ala-117–Phe-120. The active-site Proton donor/acceptor is His-149. His-150 serves as a coordination point for (S)-2,3,4,5-tetrahydrodipicolinate. Lys-153 functions as the Proton donor in the catalytic mechanism. Gly-159–Thr-160 is a binding site for (S)-2,3,4,5-tetrahydrodipicolinate.

It belongs to the DapB family.

Its subcellular location is the cytoplasm. It catalyses the reaction (S)-2,3,4,5-tetrahydrodipicolinate + NAD(+) + H2O = (2S,4S)-4-hydroxy-2,3,4,5-tetrahydrodipicolinate + NADH + H(+). The catalysed reaction is (S)-2,3,4,5-tetrahydrodipicolinate + NADP(+) + H2O = (2S,4S)-4-hydroxy-2,3,4,5-tetrahydrodipicolinate + NADPH + H(+). The protein operates within amino-acid biosynthesis; L-lysine biosynthesis via DAP pathway; (S)-tetrahydrodipicolinate from L-aspartate: step 4/4. In terms of biological role, catalyzes the conversion of 4-hydroxy-tetrahydrodipicolinate (HTPA) to tetrahydrodipicolinate. The polypeptide is 4-hydroxy-tetrahydrodipicolinate reductase (Xanthomonas campestris pv. campestris (strain 8004)).